A 257-amino-acid chain; its full sequence is NH(3)-dependent NAD(+) synthetase (257 aa).

28–35 (GISGGVDS) serves as a coordination point for ATP. D34 provides a ligand contact to Mg(2+). Residue R109 participates in deamido-NAD(+) binding. T129 contributes to the ATP binding site. Residue E134 participates in Mg(2+) binding. Residues K142 and D149 each contribute to the deamido-NAD(+) site. Positions 158 and 180 each coordinate ATP. 240–241 (HK) is a binding site for deamido-NAD(+).

The protein belongs to the NAD synthetase family. Homodimer.

It catalyses the reaction deamido-NAD(+) + NH4(+) + ATP = AMP + diphosphate + NAD(+) + H(+). It participates in cofactor biosynthesis; NAD(+) biosynthesis; NAD(+) from deamido-NAD(+) (ammonia route): step 1/1. Catalyzes the ATP-dependent amidation of deamido-NAD to form NAD. Uses ammonia as a nitrogen source. This is NH(3)-dependent NAD(+) synthetase from Pyrococcus furiosus (strain ATCC 43587 / DSM 3638 / JCM 8422 / Vc1).